The sequence spans 276 residues: Putative pyruvate, phosphate dikinase regulatory protein 2 (276 aa).

146 to 153 serves as a coordination point for ADP; it reads GVSRTSKT.

Belongs to the pyruvate, phosphate/water dikinase regulatory protein family. PDRP subfamily.

The enzyme catalyses N(tele)-phospho-L-histidyl/L-threonyl-[pyruvate, phosphate dikinase] + ADP = N(tele)-phospho-L-histidyl/O-phospho-L-threonyl-[pyruvate, phosphate dikinase] + AMP + H(+). It catalyses the reaction N(tele)-phospho-L-histidyl/O-phospho-L-threonyl-[pyruvate, phosphate dikinase] + phosphate + H(+) = N(tele)-phospho-L-histidyl/L-threonyl-[pyruvate, phosphate dikinase] + diphosphate. In terms of biological role, bifunctional serine/threonine kinase and phosphorylase involved in the regulation of the pyruvate, phosphate dikinase (PPDK) by catalyzing its phosphorylation/dephosphorylation. This Enterococcus faecalis (strain ATCC 700802 / V583) protein is Putative pyruvate, phosphate dikinase regulatory protein 2.